The sequence spans 132 residues: Chemokine-like protein TAFA-5 (132 aa).

A signal peptide spans 1-43 (MAPSPRTGSRQDATALPSMSSTFWAFMILASLLIAYCSQLAAG). Asparagine 113 is a glycosylation site (N-linked (GlcNAc...) asparagine).

It belongs to the TAFA family.

It is found in the secreted. Acts as a chemokine-like protein by regulating cell proliferation and migration through activation of G protein-coupled receptors (GPCRs), such as S1PR2 and FPR2. Stimulates chemotactic migration of macrophages mediated by the MAPK3/ERK1 and AKT1 pathway. Blocks TNFSF11/RANKL-induced osteoclast formation from macrophages by inhibiting up-regulation of osteoclast fusogenic and differentiation genes. Stimulation of macrophage migration and inhibition of osteoclast formation is mediated through the GPCR FPR2. Acts as an adipokine by negatively regulating vascular smooth muscle cell (VSMC) proliferation and migration in response to platelet-derived growth factor stimulation via GPCR S1PR2 and G protein GNA12/GNA13-transmitted RHOA signaling. Inhibits injury-induced cell proliferation and neointima formation in the femoral arteries. In Bos taurus (Bovine), this protein is Chemokine-like protein TAFA-5 (TAFA5).